The chain runs to 425 residues: Histidinol dehydrogenase (425 aa).

NAD(+) contacts are provided by tyrosine 124, glutamine 184, and asparagine 207. Residues serine 230, glutamine 252, and histidine 255 each coordinate substrate. Residues glutamine 252 and histidine 255 each contribute to the Zn(2+) site. Residues glutamate 321 and histidine 322 each act as proton acceptor in the active site. Histidine 322, aspartate 355, glutamate 409, and histidine 414 together coordinate substrate. Aspartate 355 is a binding site for Zn(2+). Histidine 414 is a binding site for Zn(2+).

The protein belongs to the histidinol dehydrogenase family. Requires Zn(2+) as cofactor.

The catalysed reaction is L-histidinol + 2 NAD(+) + H2O = L-histidine + 2 NADH + 3 H(+). Its pathway is amino-acid biosynthesis; L-histidine biosynthesis; L-histidine from 5-phospho-alpha-D-ribose 1-diphosphate: step 9/9. Catalyzes the sequential NAD-dependent oxidations of L-histidinol to L-histidinaldehyde and then to L-histidine. The sequence is that of Histidinol dehydrogenase from Halobacterium salinarum (strain ATCC 700922 / JCM 11081 / NRC-1) (Halobacterium halobium).